The sequence spans 604 residues: Netrin-1 (604 aa).

A signal peptide spans 1–24; the sequence is MMRAVWEALAALAAVACLVGAVRG. Positions 47–284 constitute a Laminin N-terminal domain; sequence HPRRCIPDFV…AVSDLQVGGR (238 aa). Residues N95, N116, and N131 are each glycosylated (N-linked (GlcNAc...) asparagine). Intrachain disulfides connect C119-C152, C285-C294, C287-C304, C306-C315, C318-C338, C341-C350, C343-C368, C371-C380, C383-C401, C404-C416, C406-C423, C425-C434, C437-C451, C472-C544, and C491-C601. Laminin EGF-like domains are found at residues 285-340, 341-403, and 404-453; these read CKCN…ECVA, CNCN…ACKA, and CDCH…PCIK. An N-linked (GlcNAc...) asparagine glycan is attached at N417. An NTR domain is found at 472 to 601; sequence CDSYCKASKG…FQQREKKGKC (130 aa). A Cell attachment site motif is present at residues 530–532; sequence RGD.

In terms of assembly, binds to its receptors; DCC, UNC5A, UNC5B, UNC5C and probably UNC5D. Binds to its receptor; DSCAM. Interacts with DCC. Interacts with APP. In terms of tissue distribution, widely expressed in normal adult tissues with highest levels in heart, small intestine, colon, liver and prostate. Reduced expression in brain tumors and neuroblastomas. Expressed in epididymis (at protein level).

The protein resides in the secreted. The protein localises to the cytoplasm. Netrins control guidance of CNS commissural axons and peripheral motor axons. Its association with either DCC or some UNC5 receptors will lead to axon attraction or repulsion, respectively. Binding to UNC5C might cause dissociation of UNC5C from polymerized TUBB3 in microtubules and thereby lead to increased microtubule dynamics and axon repulsion. Involved in dorsal root ganglion axon projection towards the spinal cord. It also serves as a survival factor via its association with its receptors which prevent the initiation of apoptosis. Involved in tumorigenesis by regulating apoptosis. The polypeptide is Netrin-1 (NTN1) (Homo sapiens (Human)).